A 552-amino-acid chain; its full sequence is Protein psiB (552 aa).

The N-terminal stretch at 1–18 (MKLLSVLITFLLATVIYS) is a signal peptide. Asn60 carries an N-linked (GlcNAc...) asparagine glycan. One can recognise a PA14 domain in the interval 114–255 (TYDTTRNIYV…EDYCGVCQGD (142 aa)). N-linked (GlcNAc...) asparagine glycosylation is found at Asn281, Asn313, Asn340, Asn365, Asn446, Asn472, and Asn521.

It belongs to the prespore-cell-inducing factor family.

The protein resides in the secreted. This Dictyostelium discoideum (Social amoeba) protein is Protein psiB (psiB).